A 206-amino-acid polypeptide reads, in one-letter code: Proteasome subunit beta type-2 (206 aa).

Belongs to the peptidase T1B family. As to quaternary structure, the 26S proteasome consists of a 20S proteasome core and two 19S regulatory subunits. The 20S proteasome core is composed of 28 subunits that are arranged in four stacked rings, resulting in a barrel-shaped structure. The two end rings are each formed by seven alpha subunits, and the two central rings are each formed by seven beta subunits. The catalytic chamber with the active sites is on the inside of the barrel.

The protein resides in the cytoplasm. It is found in the nucleus. Non-catalytic component of the proteasome, a multicatalytic proteinase complex which is characterized by its ability to cleave peptides with Arg, Phe, Tyr, Leu, and Glu adjacent to the leaving group at neutral or slightly basic pH. The proteasome has an ATP-dependent proteolytic activity. The protein is Proteasome subunit beta type-2 (PSB4) of Trypanosoma brucei brucei.